Consider the following 427-residue polypeptide: U1 small nuclear ribonucleoprotein 70 kDa (427 aa).

Disordered stretches follow at residues 82-102 (EPGDPEYAPPKPEVELPSQKR) and 215-427 (RGRT…EYVR). Residues 93–102 (PEVELPSQKR) are compositionally biased toward basic and acidic residues. Residues 138–216 (KTLFVSRLNY…RRVLVDVERG (79 aa)) enclose the RRM domain. Residues 227-241 (LGGGLGTSRVGGGEE) show a composition bias toward gly residues. 2 stretches are compositionally biased toward basic and acidic residues: residues 257 to 402 (EPSR…RYDK) and 409 to 427 (RYEREYKRSKRSESREYVR). Ser-282 is modified (phosphoserine).

Component of the spliceosome. Interacts with CYP63, U2AF35A, U2AF35B, SRZ21, RSZ22, SR34, SR45, SR45A and SCL33. Phosphorylated. The association and dissociation with SR45 is not affected by the phosphorylation status. As to expression, ubiquitous.

The protein localises to the nucleus speckle. It is found in the nucleus. Its subcellular location is the nucleoplasm. Functionally, mediates the splicing of pre-mRNA by binding to the loop I region of U1-snRNA. The sequence is that of U1 small nuclear ribonucleoprotein 70 kDa (RNU1) from Arabidopsis thaliana (Mouse-ear cress).